An 852-amino-acid polypeptide reads, in one-letter code: Chitin synthase 1 (852 aa).

Disordered regions lie at residues 27–46 and 53–97; these read EDQDDMLPSTSAAAGETNYA and SSLR…QANG. Residues 53-74 show a composition bias toward polar residues; it reads SSLRSQKSANKPTTAQNRNSAA. 7 helical membrane-spanning segments follow: residues 492 to 509, 532 to 552, 572 to 592, 601 to 621, 686 to 706, 787 to 807, and 830 to 850; these read RWLNGSFFAGVYGLIHFR, VISLVFSWFSVGNFYIAFYFI, IFDFCKYAYAFLLFVIFICSM, FLFMACLVGFAIIMCYMLFCS, FLPYLLLLPGYINILNIYAFC, THLVLAWIACNALLVVFITTS, and CGLGIFRFLGSIMFLLLGIFT.

This sequence belongs to the chitin synthase family. Class II subfamily.

Its subcellular location is the cell membrane. It carries out the reaction [(1-&gt;4)-N-acetyl-beta-D-glucosaminyl](n) + UDP-N-acetyl-alpha-D-glucosamine = [(1-&gt;4)-N-acetyl-beta-D-glucosaminyl](n+1) + UDP + H(+). Functionally, polymerizes chitin, a structural polymer of the cell wall and septum, by transferring the sugar moiety of UDP-GlcNAc to the non-reducing end of the growing chitin polymer. The protein is Chitin synthase 1 (CHS1) of Mucor circinelloides f. lusitanicus (Mucor racemosus var. lusitanicus).